We begin with the raw amino-acid sequence, 332 residues long: HTH-type transcriptional regulator RegA (332 aa).

Residues 1-57 (MATSIKDVAREAGVSIATVSRVLNDIDVVNEDTKKKVLDAIKELGYRPNIVARSLKT) enclose the HTH lacI-type domain. A DNA-binding region (H-T-H motif) is located at residues 5-24 (IKDVAREAGVSIATVSRVLN).

Its function is as follows. Involved in the regulation of amylase production. The chain is HTH-type transcriptional regulator RegA (regA) from Clostridium saccharobutylicum.